Here is a 268-residue protein sequence, read N- to C-terminus: Protein DEEPER ROOTING 1 (268 aa).

Over residues 11–21 (LNGKQGNKKPN) the composition is skewed to low complexity. Residues 11–39 (LNGKQGNKKPNTVPITTHPAKQEPREEFS) are disordered. Residues 30–39 (AKQEPREEFS) are compositionally biased toward basic and acidic residues. The IGT motif signature appears at 44–50 (GLLAIGT). The interval 220–246 (SRAASMKKYLEDRQIPTKKESNTEDDT) is disordered. A compositionally biased stretch (basic and acidic residues) spans 227-246 (KYLEDRQIPTKKESNTEDDT).

The protein belongs to the LAZY family. In terms of tissue distribution, expressed in roots.

Involved in the development of the root system architecture by influencing lateral root angles and primary root length. The protein is Protein DEEPER ROOTING 1 of Prunus persica (Peach).